Consider the following 134-residue polypeptide: Transcription antitermination protein NusB (134 aa).

The protein belongs to the NusB family.

Involved in transcription antitermination. Required for transcription of ribosomal RNA (rRNA) genes. Binds specifically to the boxA antiterminator sequence of the ribosomal RNA (rrn) operons. The sequence is that of Transcription antitermination protein NusB from Halalkalibacterium halodurans (strain ATCC BAA-125 / DSM 18197 / FERM 7344 / JCM 9153 / C-125) (Bacillus halodurans).